We begin with the raw amino-acid sequence, 624 residues long: Chaperone protein HtpG (624 aa).

The a; substrate-binding stretch occupies residues 1–336; sequence MKGQETRGFQ…SSDLPLNVSR (336 aa). Residues 337-552 form a b region; the sequence is EILQDSTVTR…ADEMSTQMAK (216 aa). The tract at residues 553–624 is c; the sequence is LFAAAGQKVP…IRRMNQLLVS (72 aa).

The protein belongs to the heat shock protein 90 family. Homodimer.

The protein localises to the cytoplasm. Its function is as follows. Molecular chaperone. Has ATPase activity. This is Chaperone protein HtpG from Shigella flexneri.